Reading from the N-terminus, the 483-residue chain is Malonate-semialdehyde dehydrogenase 2 (483 aa).

5 residues coordinate NAD(+): F152, K176, E179, R180, and S229. Residue C284 is the Nucleophile of the active site. E384 serves as a coordination point for NAD(+).

This sequence belongs to the aldehyde dehydrogenase family. IolA subfamily. In terms of assembly, homotetramer.

It catalyses the reaction 3-oxopropanoate + NAD(+) + CoA + H2O = hydrogencarbonate + acetyl-CoA + NADH + H(+). It carries out the reaction 2-methyl-3-oxopropanoate + NAD(+) + CoA + H2O = propanoyl-CoA + hydrogencarbonate + NADH + H(+). It functions in the pathway polyol metabolism; myo-inositol degradation into acetyl-CoA; acetyl-CoA from myo-inositol: step 7/7. Catalyzes the oxidation of malonate semialdehyde (MSA) and methylmalonate semialdehyde (MMSA) into acetyl-CoA and propanoyl-CoA, respectively. Is involved in a myo-inositol catabolic pathway. Bicarbonate, and not CO2, is the end-product of the enzymatic reaction. This Bacillus mycoides (strain KBAB4) (Bacillus weihenstephanensis) protein is Malonate-semialdehyde dehydrogenase 2.